Here is a 638-residue protein sequence, read N- to C-terminus: Factor of DNA methylation 3 (638 aa).

Residues 318 to 497 (FNRIFADHEK…RALISNLRDM (180 aa)) are a coiled coil.

Its function is as follows. Acts in association with FDM4 and FDM5 for RNA-directed DNA methylation (RdDM). The chain is Factor of DNA methylation 3 from Arabidopsis thaliana (Mouse-ear cress).